The chain runs to 573 residues: 2-succinyl-5-enolpyruvyl-6-hydroxy-3-cyclohexene-1-carboxylate synthase (573 aa).

This sequence belongs to the TPP enzyme family. MenD subfamily. In terms of assembly, homodimer. It depends on Mg(2+) as a cofactor. The cofactor is Mn(2+). Thiamine diphosphate is required as a cofactor.

It carries out the reaction isochorismate + 2-oxoglutarate + H(+) = 5-enolpyruvoyl-6-hydroxy-2-succinyl-cyclohex-3-ene-1-carboxylate + CO2. It participates in quinol/quinone metabolism; 1,4-dihydroxy-2-naphthoate biosynthesis; 1,4-dihydroxy-2-naphthoate from chorismate: step 2/7. It functions in the pathway quinol/quinone metabolism; menaquinone biosynthesis. Functionally, catalyzes the thiamine diphosphate-dependent decarboxylation of 2-oxoglutarate and the subsequent addition of the resulting succinic semialdehyde-thiamine pyrophosphate anion to isochorismate to yield 2-succinyl-5-enolpyruvyl-6-hydroxy-3-cyclohexene-1-carboxylate (SEPHCHC). The sequence is that of 2-succinyl-5-enolpyruvyl-6-hydroxy-3-cyclohexene-1-carboxylate synthase from Shewanella sp. (strain MR-4).